The chain runs to 633 residues: 1-deoxy-D-xylulose-5-phosphate synthase (633 aa).

Residues H72 and 113–115 contribute to the thiamine diphosphate site; that span reads GHS. Residue D144 participates in Mg(2+) binding. Thiamine diphosphate-binding positions include 145–146, N173, Y284, and E367; that span reads GA. Position 173 (N173) interacts with Mg(2+).

This sequence belongs to the transketolase family. DXPS subfamily. In terms of assembly, homodimer. It depends on Mg(2+) as a cofactor. Thiamine diphosphate serves as cofactor.

The enzyme catalyses D-glyceraldehyde 3-phosphate + pyruvate + H(+) = 1-deoxy-D-xylulose 5-phosphate + CO2. It participates in metabolic intermediate biosynthesis; 1-deoxy-D-xylulose 5-phosphate biosynthesis; 1-deoxy-D-xylulose 5-phosphate from D-glyceraldehyde 3-phosphate and pyruvate: step 1/1. Catalyzes the acyloin condensation reaction between C atoms 2 and 3 of pyruvate and glyceraldehyde 3-phosphate to yield 1-deoxy-D-xylulose-5-phosphate (DXP). In Lysinibacillus sphaericus (strain C3-41), this protein is 1-deoxy-D-xylulose-5-phosphate synthase.